A 194-amino-acid polypeptide reads, in one-letter code: Fimbrial protein 987P (194 aa).

Positions 1–23 (MRMKKSALTLAVLSSLFSGYSLA) are cleaved as a signal peptide. Cys46 and Cys85 are disulfide-bonded.

Belongs to the fimbrial protein family.

It localises to the fimbrium. The polypeptide is Fimbrial protein 987P (fasA) (Escherichia coli).